The sequence spans 218 residues: Large ribosomal subunit protein uL3 (218 aa).

The interval 124–162 (KRHGFSRGPMTHGSKNHREPGSTGAGTTPGRIYPGKRMA) is disordered.

Belongs to the universal ribosomal protein uL3 family. As to quaternary structure, part of the 50S ribosomal subunit. Forms a cluster with proteins L14 and L19.

Its function is as follows. One of the primary rRNA binding proteins, it binds directly near the 3'-end of the 23S rRNA, where it nucleates assembly of the 50S subunit. In Synechococcus sp. (strain CC9605), this protein is Large ribosomal subunit protein uL3.